The following is a 303-amino-acid chain: Putative S-adenosyl-L-methionine-dependent methyltransferase SCO6443 (303 aa).

Residues Asp-130 and 159-160 contribute to the S-adenosyl-L-methionine site; that span reads DL.

It belongs to the UPF0677 family.

Functionally, exhibits S-adenosyl-L-methionine-dependent methyltransferase activity. This is Putative S-adenosyl-L-methionine-dependent methyltransferase SCO6443 from Streptomyces coelicolor (strain ATCC BAA-471 / A3(2) / M145).